Consider the following 81-residue polypeptide: Small ribosomal subunit protein uS17 (81 aa).

It belongs to the universal ribosomal protein uS17 family. In terms of assembly, part of the 30S ribosomal subunit.

In terms of biological role, one of the primary rRNA binding proteins, it binds specifically to the 5'-end of 16S ribosomal RNA. In Trichormus variabilis (strain ATCC 29413 / PCC 7937) (Anabaena variabilis), this protein is Small ribosomal subunit protein uS17.